A 347-amino-acid chain; its full sequence is Fructose-1,6-bisphosphatase class 1 (347 aa).

Mg(2+)-binding residues include Glu106, Asp128, Ile130, and Asp131. Substrate-binding positions include 131–134 (DGSS), Asn223, Tyr251, and Lys281. Glu287 contributes to the Mg(2+) binding site.

The protein belongs to the FBPase class 1 family. As to quaternary structure, homotetramer. The cofactor is Mg(2+).

The protein resides in the cytoplasm. It catalyses the reaction beta-D-fructose 1,6-bisphosphate + H2O = beta-D-fructose 6-phosphate + phosphate. The protein operates within carbohydrate biosynthesis; Calvin cycle. This Synechocystis sp. (strain ATCC 27184 / PCC 6803 / Kazusa) protein is Fructose-1,6-bisphosphatase class 1.